Consider the following 217-residue polypeptide: Non-structural protein NS3 (217 aa).

The protein belongs to the orbivirus NS3 family.

In terms of biological role, may play a role in the release of virions from infected cells. In Camelus dromedarius (Dromedary), this protein is Non-structural protein NS3 (Segment-10).